Consider the following 65-residue polypeptide: Large ribosomal subunit protein bL35 (65 aa).

The segment at 1 to 26 is disordered; sequence MPKMKTNRASAKRFKKTASGGFKAGQ.

It belongs to the bacterial ribosomal protein bL35 family.

The sequence is that of Large ribosomal subunit protein bL35 from Oenococcus oeni (strain ATCC BAA-331 / PSU-1).